The sequence spans 156 residues: Small ribosomal subunit protein uS7 (156 aa).

This sequence belongs to the universal ribosomal protein uS7 family. Part of the 30S ribosomal subunit. Contacts proteins S9 and S11.

Its function is as follows. One of the primary rRNA binding proteins, it binds directly to 16S rRNA where it nucleates assembly of the head domain of the 30S subunit. Is located at the subunit interface close to the decoding center, probably blocks exit of the E-site tRNA. This is Small ribosomal subunit protein uS7 from Afipia carboxidovorans (strain ATCC 49405 / DSM 1227 / KCTC 32145 / OM5) (Oligotropha carboxidovorans).